A 570-amino-acid chain; its full sequence is Sulfite reductase [NADPH] hemoprotein beta-component (570 aa).

Residues C434, C440, C479, and C483 each coordinate [4Fe-4S] cluster. Position 483 (C483) interacts with siroheme.

The protein belongs to the nitrite and sulfite reductase 4Fe-4S domain family. In terms of assembly, alpha(8)-beta(8). The alpha component is a flavoprotein, the beta component is a hemoprotein. Siroheme serves as cofactor. The cofactor is [4Fe-4S] cluster.

The enzyme catalyses hydrogen sulfide + 3 NADP(+) + 3 H2O = sulfite + 3 NADPH + 4 H(+). It functions in the pathway sulfur metabolism; hydrogen sulfide biosynthesis; hydrogen sulfide from sulfite (NADPH route): step 1/1. Its function is as follows. Component of the sulfite reductase complex that catalyzes the 6-electron reduction of sulfite to sulfide. This is one of several activities required for the biosynthesis of L-cysteine from sulfate. The sequence is that of Sulfite reductase [NADPH] hemoprotein beta-component from Escherichia coli O9:H4 (strain HS).